Consider the following 493-residue polypeptide: Acetylcholine receptor subunit beta-type unc-29 (493 aa).

A signal peptide spans 1–26 (MRTNRLSWILVLSVVIFLVIINTINA). N-linked (GlcNAc...) asparagine glycans are attached at residues N25 and N50. Over 27–232 (SDDEERLMVD…QVRIRRKTLF (206 aa)) the chain is Extracellular. A disulfide bridge links C155 with C169. The next 3 helical transmembrane spans lie at 233–254 (YTVV…VFFL), 262–280 (ITLT…LLVS), and 296–317 (YLLL…IINV). The Cytoplasmic segment spans residues 318-445 (YFRGPRTHRM…WKYVAMIIDR (128 aa)). The chain crosses the membrane as a helical span at residues 446 to 466 (LLLYVFFGITVGGTCGILFSA).

It belongs to the ligand-gated ion channel (TC 1.A.9) family. Acetylcholine receptor (TC 1.A.9.1) subfamily. As to quaternary structure, interacts with lev-1. Component of nicotinic acetylcholine receptor composed of 2 non-alpha subunits lev-1 and unc-29, and 3 alpha subunits unc-38, unc-63 and lev-8. Interacts with oig-4. Interacts with crld-1.

The protein resides in the postsynaptic cell membrane. It localises to the cell membrane. In terms of biological role, non-alpha subunit of nicotinic acetylcholine receptor (nAChR). Involved in nAChR sensitivity to nicotine and levasimole. This Caenorhabditis elegans protein is Acetylcholine receptor subunit beta-type unc-29.